A 360-amino-acid polypeptide reads, in one-letter code: Uroporphyrinogen decarboxylase (360 aa).

Substrate is bound by residues Arg-31–Arg-35, Asp-81, Tyr-157, Thr-212, and His-333.

The protein belongs to the uroporphyrinogen decarboxylase family. In terms of assembly, homodimer.

Its subcellular location is the cytoplasm. It carries out the reaction uroporphyrinogen III + 4 H(+) = coproporphyrinogen III + 4 CO2. It functions in the pathway porphyrin-containing compound metabolism; protoporphyrin-IX biosynthesis; coproporphyrinogen-III from 5-aminolevulinate: step 4/4. Functionally, catalyzes the decarboxylation of four acetate groups of uroporphyrinogen-III to yield coproporphyrinogen-III. This chain is Uroporphyrinogen decarboxylase, found in Herminiimonas arsenicoxydans.